The primary structure comprises 346 residues: Trans-enoyl reductase FFUJ_12240 (346 aa).

Residue 40-43 (HDAK) participates in NADP(+) binding. 124-131 (LAIATAGL) contributes to the substrate binding site. NADP(+)-binding positions include 157–160 (ATAT), 180–183 (SPSN), tyrosine 198, and 245–246 (LE). 266–270 (APSIL) contributes to the substrate binding site. Residue 335-336 (VH) participates in NADP(+) binding.

It belongs to the zinc-containing alcohol dehydrogenase family.

Functionally, trans-enoyl reductase; part of the gene cluster that mediates the biosynthesis of fujikurins A-D, secondary metabolites playing a role during rice infection. The polyketide synthase PKS19 acts with the trans-enoyl reductase FFUJ_12240 and the polyketide transferase FFUJ_12241 to produce fujikurins, however, the biosynthesis pathway has not been identified yet. The protein is Trans-enoyl reductase FFUJ_12240 of Gibberella fujikuroi (strain CBS 195.34 / IMI 58289 / NRRL A-6831) (Bakanae and foot rot disease fungus).